A 171-amino-acid chain; its full sequence is Envelope protein UL128 (171 aa).

It belongs to the HHV-5 UL128 protein family. As to quaternary structure, forms the envelope pentamer complex (PC) composed of gH, gL, UL128, UL130, and UL131A. The pentamer interacts with host NRP2.

It localises to the virion membrane. In terms of biological role, plays a role in viral entry into host cells. Forms a pentameric complex at the surface of the viral envelope together with gH, gL, UL130 and UL131. This complex is required for entry in epithelial, endothelial and myeloid host cells. Mechanistically, engages host receptor(s) including neurophilin 2/NRP2 to mediate infection. Additionally, monomeric UL128 may interfere with certain inflammatory cytokines to increase infection and dissemination by blocking monocytes migration. This is Envelope protein UL128 (UL128) from Human cytomegalovirus (strain Merlin) (HHV-5).